A 232-amino-acid polypeptide reads, in one-letter code: GLQEFQFEYPFVIQGIAGCELHSGKAIQSFLRAGFEGLDFVSIENHSCVPEPEGGSEAQWFCVFITQYQGILAIIDRLLSKTCPRYLLGVLDAGKAELHRQVKPEAWLSSGPTPGPGRLLLVCHVSGFYPKPVRVMWMRGEQEQPGTQQGNIILNADWTWYLRVTLDVAAGEAAGLSCRVKHSSLGDQDIILYWGHPMYIGLIFVAIIVPSLILLICLALWFWRRWSYQTVL.

The Extracellular portion of the chain corresponds to 1-201 (GLQEFQFEYP…LYWGHPMYIG (201 aa)). 3 disulfides stabilise this stretch: C19/C83, C48/C62, and C123/C178. An N-linked (GlcNAc...) asparagine glycan is attached at N45. Positions 84–194 (PRYLLGVLDA…LGDQDIILYW (111 aa)) constitute an Ig-like domain. A helical membrane pass occupies residues 202–222 (LIFVAIIVPSLILLICLALWF). The Cytoplasmic portion of the chain corresponds to 223-232 (WRRWSYQTVL).

In terms of assembly, heterodimer with B2M (beta-2-microglobulin). Interacts with saposin C.

The protein localises to the cell membrane. The protein resides in the endosome membrane. Its subcellular location is the lysosome membrane. Antigen-presenting protein that binds self and non-self lipid and glycolipid antigens and presents them to T-cell receptors on natural killer T-cells. This Ovis aries (Sheep) protein is T-cell surface glycoprotein CD1b-3.